A 466-amino-acid polypeptide reads, in one-letter code: Phosphomethylpyrimidine synthase (466 aa).

Substrate contacts are provided by residues Asn80, Met109, Tyr139, His175, 195 to 197 (SRG), 236 to 239 (DSLR), and Glu275. A Zn(2+)-binding site is contributed by His279. Position 302 (Tyr302) interacts with substrate. His343 contacts Zn(2+). [4Fe-4S] cluster is bound by residues Cys423, Cys426, and Cys431.

It belongs to the ThiC family. [4Fe-4S] cluster is required as a cofactor.

It catalyses the reaction 5-amino-1-(5-phospho-beta-D-ribosyl)imidazole + S-adenosyl-L-methionine = 4-amino-2-methyl-5-(phosphooxymethyl)pyrimidine + CO + 5'-deoxyadenosine + formate + L-methionine + 3 H(+). The protein operates within cofactor biosynthesis; thiamine diphosphate biosynthesis. Functionally, catalyzes the synthesis of the hydroxymethylpyrimidine phosphate (HMP-P) moiety of thiamine from aminoimidazole ribotide (AIR) in a radical S-adenosyl-L-methionine (SAM)-dependent reaction. The protein is Phosphomethylpyrimidine synthase of Synechococcus sp. (strain CC9902).